The primary structure comprises 574 residues: Amino-acid acetyltransferase, mitochondrial (574 aa).

A mitochondrion-targeting transit peptide spans 1–13; that stretch reads MWRRIFAHELKYD. An N-acetyltransferase domain is found at 392 to 560; the sequence is KGAKPSSNSP…KRLREFMRSV (169 aa).

Belongs to the acetyltransferase family. In terms of assembly, interacts with the acetylglutamate kinase chain of AGR5,6.

It is found in the mitochondrion. It catalyses the reaction L-glutamate + acetyl-CoA = N-acetyl-L-glutamate + CoA + H(+). It functions in the pathway amino-acid biosynthesis; L-arginine biosynthesis; N(2)-acetyl-L-ornithine from L-glutamate: step 1/4. With respect to regulation, feedback inhibition by L-arginine. N-acetylglutamate synthase involved in arginine biosynthesis. This is Amino-acid acetyltransferase, mitochondrial (ARG2) from Saccharomyces cerevisiae (strain RM11-1a) (Baker's yeast).